The chain runs to 149 residues: Nucleoside diphosphate kinase (149 aa).

The ATP site is built by K11, F59, R87, T93, R104, and N114. The active-site Pros-phosphohistidine intermediate is the H117.

This sequence belongs to the NDK family. Homotetramer. Mg(2+) is required as a cofactor.

The protein resides in the cytoplasm. The catalysed reaction is a 2'-deoxyribonucleoside 5'-diphosphate + ATP = a 2'-deoxyribonucleoside 5'-triphosphate + ADP. It carries out the reaction a ribonucleoside 5'-diphosphate + ATP = a ribonucleoside 5'-triphosphate + ADP. Major role in the synthesis of nucleoside triphosphates other than ATP. The ATP gamma phosphate is transferred to the NDP beta phosphate via a ping-pong mechanism, using a phosphorylated active-site intermediate. The protein is Nucleoside diphosphate kinase of Treponema pallidum (strain Nichols).